The chain runs to 451 residues: L,D-transpeptidase 5 (451 aa).

The 122-residue stretch at 263-384 (QVVKAEVSSH…AVYGDPVEVT (122 aa)) folds into the L,D-TPase catalytic domain. Substrate is bound by residues Y323 and 337–338 (NG). Residue H342 is the Proton donor/acceptor of the active site. The Nucleophile role is filled by C360. N362 is a binding site for substrate. The interval 417–451 (AAKPAATQIPVTAPVTPSDAPTPSGTPTTTNGPGG) is disordered. Low complexity predominate over residues 437-451 (PTPSGTPTTTNGPGG).

It participates in cell wall biogenesis; peptidoglycan biosynthesis. With respect to regulation, in contrast to other LDT paralogs, LdtMt5 is not inactivated by the beta-lactam carbapenems; beta-lactam carbapenems form covalent adducts with other LDT paralogs but the formation of covalent adducts was not detected for LdtMt5. Functionally, generates 3-&gt;3 cross-links in peptidoglycan, catalyzing the cleavage of the mDap(3)-D-Ala(4) bond of a tetrapeptide donor stem and the formation of a bond between the carbonyl of mDap(3) of the donor stem and the side chain of mDap(3) of the acceptor stem. Is specific for donor substrates containing a stem tetrapeptide since it cannot use pentapeptide stems. The chain is L,D-transpeptidase 5 (lprQ) from Mycobacterium tuberculosis (strain ATCC 25618 / H37Rv).